Reading from the N-terminus, the 901-residue chain is HTH-type transcriptional regulator MalT (901 aa).

39-46 (SPAGYGKT) is a binding site for ATP. The region spanning 829 to 894 (ELIRTSPLTQ…DAVQHAQQLL (66 aa)) is the HTH luxR-type domain. A DNA-binding region (H-T-H motif) is located at residues 853 to 872 (NEQIAGELEVAATTIKTHIR).

It belongs to the MalT family. In terms of assembly, monomer in solution. Oligomerizes to an active state in the presence of the positive effectors ATP and maltotriose.

Activated by ATP and maltotriose, which are both required for DNA binding. Its function is as follows. Positively regulates the transcription of the maltose regulon whose gene products are responsible for uptake and catabolism of malto-oligosaccharides. Specifically binds to the promoter region of its target genes, recognizing a short DNA motif called the MalT box. The sequence is that of HTH-type transcriptional regulator MalT from Escherichia fergusonii (strain ATCC 35469 / DSM 13698 / CCUG 18766 / IAM 14443 / JCM 21226 / LMG 7866 / NBRC 102419 / NCTC 12128 / CDC 0568-73).